We begin with the raw amino-acid sequence, 583 residues long: Steryl-sulfatase (583 aa).

The N-terminal stretch at 1-21 (MPLRKMKIPFLLLFFLWEAES) is a signal peptide. Topologically, residues 22–184 (HAASRPNIIL…GSVFTTGFKR (163 aa)) are lumenal. D35 and D36 together coordinate Ca(2+). N47 carries an N-linked (GlcNAc...) asparagine glycan. C75 lines the Ca(2+) pocket. Catalysis depends on C75, which acts as the Nucleophile. C75 bears the 3-oxoalanine (Cys) mark. H136 is an active-site residue. Cystine bridges form between C141/C148 and C170/C242. A helical transmembrane segment spans residues 185–208 (LVFLPLQIVGVTLLTLAALNCLGL). At 209–212 (LHVP) the chain is on the cytoplasmic side. The helical transmembrane segment at 213–234 (LGVFFSLLFLAALILTLFLGFL) threads the bilayer. The Lumenal segment spans residues 235–583 (HYFRPLNCFM…REKQDKRLSR (349 aa)). N259 is a glycosylation site (N-linked (GlcNAc...) asparagine). 2 residues coordinate Ca(2+): D342 and Q343. 4 cysteine pairs are disulfide-bonded: C446-C489, C481-C487, C562-C570, and C563-C572.

The protein belongs to the sulfatase family. Homodimer. Ca(2+) serves as cofactor. In terms of processing, the conversion to 3-oxoalanine (also known as C-formylglycine, FGly), of a serine or cysteine residue in prokaryotes and of a cysteine residue in eukaryotes, is critical for catalytic activity.

The protein localises to the cytoplasmic vesicle. It is found in the secretory vesicle. The protein resides in the microneme membrane. It localises to the endoplasmic reticulum membrane. The catalysed reaction is dehydroepiandrosterone 3-sulfate + H2O = 3beta-hydroxyandrost-5-en-17-one + sulfate + H(+). It carries out the reaction estrone 3-sulfate + H2O = estrone + sulfate + H(+). Its function is as follows. Catalyzes the conversion of sulfated steroid precursors, such as dehydroepiandrosterone sulfate (DHEA-S) and estrone sulfate to the free steroid. In Homo sapiens (Human), this protein is Steryl-sulfatase (STS).